Consider the following 356-residue polypeptide: DNA polymerase IV (356 aa).

One can recognise a UmuC domain in the interval Ile7–Gly188. Mg(2+)-binding residues include Asp11 and Asp106. Glu107 is an active-site residue.

This sequence belongs to the DNA polymerase type-Y family. In terms of assembly, monomer. Requires Mg(2+) as cofactor.

It localises to the cytoplasm. The catalysed reaction is DNA(n) + a 2'-deoxyribonucleoside 5'-triphosphate = DNA(n+1) + diphosphate. Functionally, poorly processive, error-prone DNA polymerase involved in untargeted mutagenesis. Copies undamaged DNA at stalled replication forks, which arise in vivo from mismatched or misaligned primer ends. These misaligned primers can be extended by PolIV. Exhibits no 3'-5' exonuclease (proofreading) activity. May be involved in translesional synthesis, in conjunction with the beta clamp from PolIII. This Listeria monocytogenes serotype 4b (strain CLIP80459) protein is DNA polymerase IV.